Here is a 202-residue protein sequence, read N- to C-terminus: Peptide methionine sulfoxide reductase A3 (202 aa).

Positions 1–34 (MNILNRLGLGSSGQTNMDPSPIAQGNDDDTPAPG) are disordered. Residue Ser189 is modified to Phosphoserine.

This sequence belongs to the MsrA Met sulfoxide reductase family. Expressed in rosette and cauline leaves, and at lower levels in roots, stems and flowers (at protein level).

The protein localises to the cytoplasm. The protein resides in the cytosol. The enzyme catalyses L-methionyl-[protein] + [thioredoxin]-disulfide + H2O = L-methionyl-(S)-S-oxide-[protein] + [thioredoxin]-dithiol. It carries out the reaction [thioredoxin]-disulfide + L-methionine + H2O = L-methionine (S)-S-oxide + [thioredoxin]-dithiol. Catalyzes the reduction of methionine sulfoxide (MetSO) to methionine in proteins. Plays a protective role against oxidative stress by restoring activity to proteins that have been inactivated by methionine oxidation. May prevent cellular oxidative damage due to light exposure. MSRA family specifically reduces the MetSO S-enantiomer. The polypeptide is Peptide methionine sulfoxide reductase A3 (MSRA3) (Arabidopsis thaliana (Mouse-ear cress)).